Consider the following 524-residue polypeptide: Ribonuclease Y (524 aa).

Residues 2–22 (GIVINLFLIIAASIVFFVVGF) traverse the membrane as a helical segment. The KH domain occupies 214–299 (ALSVVHIQSD…KAYQDAKKEI (86 aa)). In terms of domain architecture, HD spans 340–432 (LLQHSREVAM…VDAANIVSLS (93 aa)).

This sequence belongs to the RNase Y family.

It localises to the cell membrane. Functionally, endoribonuclease that initiates mRNA decay. The protein is Ribonuclease Y of Chlorobaculum tepidum (strain ATCC 49652 / DSM 12025 / NBRC 103806 / TLS) (Chlorobium tepidum).